The chain runs to 151 residues: Actin-depolymerizing factor 10 (151 aa).

Positions 15 to 149 (PAWIEVPEKS…DLEVLRGRAN (135 aa)) constitute an ADF-H domain.

Belongs to the actin-binding proteins ADF family.

Actin-depolymerizing protein. Severs actin filaments (F-actin) and binds to actin monomers. This is Actin-depolymerizing factor 10 (ADF10) from Oryza sativa subsp. japonica (Rice).